The chain runs to 57 residues: Large ribosomal subunit protein bL32 (57 aa).

Residues 1-19 (MAVPKRRKSRSNTRSRRSQ) show a composition bias toward basic residues. The interval 1-22 (MAVPKRRKSRSNTRSRRSQWKA) is disordered.

This sequence belongs to the bacterial ribosomal protein bL32 family.

The sequence is that of Large ribosomal subunit protein bL32 from Mycobacterium tuberculosis (strain ATCC 25177 / H37Ra).